Reading from the N-terminus, the 1068-residue chain is Carbamoyl phosphate synthase large chain (1068 aa).

Residues 1-403 (MPKRTDINTI…SLQKALRGLE (403 aa)) are carboxyphosphate synthetic domain. 12 residues coordinate ATP: arginine 129, arginine 169, glycine 175, glycine 176, glutamine 208, valine 210, glutamate 215, glycine 241, valine 242, histidine 243, glutamine 285, and glutamate 299. In terms of domain architecture, ATP-grasp 1 spans 133–328 (KEAMEKIGLS…IAKVAAKLAV (196 aa)). Residues glutamine 285, glutamate 299, and asparagine 301 each coordinate Mg(2+). The Mn(2+) site is built by glutamine 285, glutamate 299, and asparagine 301. The tract at residues 404-548 (TGICGFNLMS…YSTYEEECES (145 aa)) is oligomerization domain. The segment at 549 to 930 (RPSDKKKIMI…AFLKAQLGAN (382 aa)) is carbamoyl phosphate synthetic domain. The ATP-grasp 2 domain maps to 673-864 (QQILHKLHLK…LAKIAARVMA (192 aa)). Residues arginine 709, histidine 748, leucine 750, glutamate 755, glycine 780, isoleucine 781, histidine 782, serine 783, glutamine 823, and glutamate 835 each contribute to the ATP site. Residues glutamine 823, glutamate 835, and asparagine 837 each contribute to the Mg(2+) site. Residues glutamine 823, glutamate 835, and asparagine 837 each contribute to the Mn(2+) site. In terms of domain architecture, MGS-like spans 931-1068 (ERIPKTGKVF…SLQDLHQRLL (138 aa)). The interval 931–1068 (ERIPKTGKVF…SLQDLHQRLL (138 aa)) is allosteric domain.

The protein belongs to the CarB family. In terms of assembly, composed of two chains; the small (or glutamine) chain promotes the hydrolysis of glutamine to ammonia, which is used by the large (or ammonia) chain to synthesize carbamoyl phosphate. Tetramer of heterodimers (alpha,beta)4. Mg(2+) is required as a cofactor. Requires Mn(2+) as cofactor.

It catalyses the reaction hydrogencarbonate + L-glutamine + 2 ATP + H2O = carbamoyl phosphate + L-glutamate + 2 ADP + phosphate + 2 H(+). The enzyme catalyses hydrogencarbonate + NH4(+) + 2 ATP = carbamoyl phosphate + 2 ADP + phosphate + 2 H(+). The protein operates within amino-acid biosynthesis; L-arginine biosynthesis; carbamoyl phosphate from bicarbonate: step 1/1. It participates in pyrimidine metabolism; UMP biosynthesis via de novo pathway; (S)-dihydroorotate from bicarbonate: step 1/3. Its function is as follows. Large subunit of the glutamine-dependent carbamoyl phosphate synthetase (CPSase). CPSase catalyzes the formation of carbamoyl phosphate from the ammonia moiety of glutamine, carbonate, and phosphate donated by ATP, constituting the first step of 2 biosynthetic pathways, one leading to arginine and/or urea and the other to pyrimidine nucleotides. The large subunit (synthetase) binds the substrates ammonia (free or transferred from glutamine from the small subunit), hydrogencarbonate and ATP and carries out an ATP-coupled ligase reaction, activating hydrogencarbonate by forming carboxy phosphate which reacts with ammonia to form carbamoyl phosphate. This chain is Carbamoyl phosphate synthase large chain, found in Pasteurella multocida (strain Pm70).